Here is a 271-residue protein sequence, read N- to C-terminus: 2-amino-3,7-dideoxy-D-threo-hept-6-ulosonate synthase (271 aa).

Asp-33 functions as the Proton acceptor in the catalytic mechanism. 1-deoxy-D-threo-hexo-2,5-diulose 6-phosphate contacts are provided by residues 33–37 (DHGVS) and 153–155 (YPR). The active-site Proton donor is Tyr-153. Lys-184 functions as the Schiff-base intermediate with substrate in the catalytic mechanism. Residues 209–210 (GG) and 236–237 (GR) contribute to the 1-deoxy-D-threo-hexo-2,5-diulose 6-phosphate site.

Belongs to the DeoC/FbaB aldolase family. ADHS subfamily. As to quaternary structure, homodecamer.

It catalyses the reaction 1-deoxy-D-threo-hexo-2,5-diulose 6-phosphate + L-aspartate 4-semialdehyde = 2,3-dioxopropyl phosphate + 2-amino-2,3,7-trideoxy-D-lyxo-hept-6-ulosonate. In terms of biological role, catalyzes a transaldol reaction between 6-deoxy-5-ketofructose 1-phosphate (DKFP) and L-aspartate semialdehyde (ASA) with an elimination of hydroxypyruvaldehyde phosphate to yield 2-amino-3,7-dideoxy-D-threo-hept-6-ulosonate (ADH). Plays a key role in an alternative pathway of the biosynthesis of 3-dehydroquinate (DHQ), which is involved in the canonical pathway for the biosynthesis of aromatic amino acids. This is 2-amino-3,7-dideoxy-D-threo-hept-6-ulosonate synthase from Methanococcus aeolicus (strain ATCC BAA-1280 / DSM 17508 / OCM 812 / Nankai-3).